Reading from the N-terminus, the 105-residue chain is Fe-S protein maturation auxiliary factor PG_1777 (105 aa).

Belongs to the Fe-S cluster assembly domain superfamily. MIP18-like family. In terms of assembly, putative homodimer; may be disulfide-linked.

In terms of biological role, iron binding protein that protects DNA from Fenton chemistry-mediated damage caused by hydrogen peroxide induced oxidative stress. May be involved in iron-sulfur cluster assembly. The polypeptide is Fe-S protein maturation auxiliary factor PG_1777 (Porphyromonas gingivalis (strain ATCC BAA-308 / W83)).